We begin with the raw amino-acid sequence, 986 residues long: Bifunctional glutamine synthetase adenylyltransferase/adenylyl-removing enzyme (986 aa).

The interval 1 to 475 (MSFPLAHVDA…VFDHLIGEEK (475 aa)) is adenylyl removase. Positions 481-986 (TETLWHDFLE…LFEHNDKYEE (506 aa)) are adenylyl transferase.

The protein belongs to the GlnE family. The cofactor is Mg(2+).

The catalysed reaction is [glutamine synthetase]-O(4)-(5'-adenylyl)-L-tyrosine + phosphate = [glutamine synthetase]-L-tyrosine + ADP. It carries out the reaction [glutamine synthetase]-L-tyrosine + ATP = [glutamine synthetase]-O(4)-(5'-adenylyl)-L-tyrosine + diphosphate. In terms of biological role, involved in the regulation of glutamine synthetase GlnA, a key enzyme in the process to assimilate ammonia. When cellular nitrogen levels are high, the C-terminal adenylyl transferase (AT) inactivates GlnA by covalent transfer of an adenylyl group from ATP to specific tyrosine residue of GlnA, thus reducing its activity. Conversely, when nitrogen levels are low, the N-terminal adenylyl removase (AR) activates GlnA by removing the adenylyl group by phosphorolysis, increasing its activity. The regulatory region of GlnE binds the signal transduction protein PII (GlnB) which indicates the nitrogen status of the cell. This is Bifunctional glutamine synthetase adenylyltransferase/adenylyl-removing enzyme from Pasteurella multocida (strain Pm70).